A 102-amino-acid polypeptide reads, in one-letter code: MATVPLGQGLLLAAILFALGLVGVLVRRNLLFMLMSLEVMLNAAGVAFIVAGARWASPDGQIMFILVLTLAAAEVSVGLALILLMHRRIPTLDADAGDGLRG.

Helical transmembrane passes span 6–26, 30–50, and 64–84; these read LGQGLLLAAILFALGLVGVLV, LLFMLMSLEVMLNAAGVAFIV, and FILVLTLAAAEVSVGLALILL.

The protein belongs to the complex I subunit 4L family. NDH-1 is composed of 14 different subunits. Subunits NuoA, H, J, K, L, M, N constitute the membrane sector of the complex.

Its subcellular location is the cell inner membrane. It catalyses the reaction a quinone + NADH + 5 H(+)(in) = a quinol + NAD(+) + 4 H(+)(out). Its function is as follows. NDH-1 shuttles electrons from NADH, via FMN and iron-sulfur (Fe-S) centers, to quinones in the respiratory chain. The immediate electron acceptor for the enzyme in this species is believed to be ubiquinone. Couples the redox reaction to proton translocation (for every two electrons transferred, four hydrogen ions are translocated across the cytoplasmic membrane), and thus conserves the redox energy in a proton gradient. This chain is NADH-quinone oxidoreductase subunit K, found in Acidiphilium cryptum (strain JF-5).